Consider the following 325-residue polypeptide: MACGEFSLIARYFDRVRSSRLDVELGIGDDCALLNIPEKQTLAISTDTLVAGNHFLPDIDPADLAYKALAVNLSDLAAMGADPAWLTLALTLPDVDEAWLESFSDSLFDLLNYYDMQLIGGDTTRGPLSMTLGIHGFVPMGRALTRSGAKPGDWIYVTGTPGDSAAGLAILQNRLQVADAKDADYLIKRHLRPSPRILQGQALRDLANSAIDLSDGLISDLGHIVKASDCGARIDLALLPFSDALSRHVEPEQALRWALSGGEDYELCFTVPELNRGALDVALGHLGVPFTCIGQMTADIEGLCFIRDGEPVTLDWKGYDHFATP.

The Mg(2+) site is built by D30, S45, T46, and D47. Position 54 (H54) interacts with substrate. Positions 75 and 122 each coordinate Mg(2+). Residues 121 to 122 and R146 each bind ATP; that span reads GD. Residue D212 participates in Mg(2+) binding. S214 serves as a coordination point for ATP. D215 provides a ligand contact to Mg(2+). Substrate contacts are provided by E263 and Y319.

Belongs to the thiamine-monophosphate kinase family.

It carries out the reaction thiamine phosphate + ATP = thiamine diphosphate + ADP. Its pathway is cofactor biosynthesis; thiamine diphosphate biosynthesis; thiamine diphosphate from thiamine phosphate: step 1/1. Is markedly activated by the monovalent cations K(+), NH(4)(+), and Rb(+). Is significantly inhibited by ADP, AMP, p-chloromercuribenzoate, N-ethylmaleimide, pyrophosphate, and EDTA. Its function is as follows. Catalyzes the ATP-dependent phosphorylation of thiamine-monophosphate (TMP) to form thiamine-pyrophosphate (TPP), the active form of vitamin B1. Cannot use thiamine as substrate. Is highly specific for ATP as phosphate donor. The protein is Thiamine-monophosphate kinase (thiL) of Escherichia coli (strain K12).